Reading from the N-terminus, the 587-residue chain is Arginine--tRNA ligase (587 aa).

The 'HIGH' region motif lies at 127–137; it reads PNLAKEMHVGH.

Belongs to the class-I aminoacyl-tRNA synthetase family. Monomer.

It localises to the cytoplasm. The enzyme catalyses tRNA(Arg) + L-arginine + ATP = L-arginyl-tRNA(Arg) + AMP + diphosphate. The polypeptide is Arginine--tRNA ligase (Pseudomonas aeruginosa (strain LESB58)).